Here is a 304-residue protein sequence, read N- to C-terminus: Mitochondrial glycine transporter (304 aa).

Solcar repeat units lie at residues 3-82 (GKSK…VREA), 106-186 (ENLI…LKVA), and 209-293 (SSAM…LVKR). The next 6 membrane-spanning stretches (helical) occupy residues 9 to 34 (IYAG…TRVQ), 57 to 83 (GTLP…REAV), 108 to 133 (LISG…VRYE), 161 to 184 (GWAA…EQLK), 213 to 239 (INSV…KTRM), and 268 to 286 (GLAL…SWCI).

Belongs to the mitochondrial carrier (TC 2.A.29) family. SLC25A38 subfamily.

It is found in the mitochondrion inner membrane. The catalysed reaction is glycine(in) = glycine(out). Functionally, mitochondrial glycine transporter that imports glycine into the mitochondrial matrix. Plays an important role in providing glycine for the first enzymatic step in heme biosynthesis, the condensation of glycine with succinyl-CoA to produce 5-aminolevulinate (ALA) in the mitochondrial matrix. The sequence is that of Mitochondrial glycine transporter from Yarrowia lipolytica (strain CLIB 122 / E 150) (Yeast).